We begin with the raw amino-acid sequence, 141 residues long: Protein MGF 100-2L (141 aa).

It belongs to the asfivirus MGF 100 family.

In terms of biological role, plays a role in virus cell tropism, and may be required for efficient virus replication in macrophages. The protein is Protein MGF 100-2L of African swine fever virus (isolate Pig/Kenya/KEN-50/1950) (ASFV).